The chain runs to 213 residues: MKILVSGFDPFGGEKINPAIESVKLLPDSIKGNEIIKIEIPTVIGKSVDKLKEKIKEVKPDVVISVGQAGGREDITVERVAINVDDCRIKDNEGNQPIDEKIAEDGPDAYLLTLPIKAMVENIKSANIPASVSNTAGTFICNHVAYGMAHVRATEYPNMRTGFIHIPFLPEQVLNKPHTASMNLDTIAKALEKAIEAVIDNDEDIKVTGGKTH.

Residues Glu78, Cys141, and His165 contribute to the active site.

It belongs to the peptidase C15 family. In terms of assembly, homotetramer.

The protein localises to the cytoplasm. It catalyses the reaction Release of an N-terminal pyroglutamyl group from a polypeptide, the second amino acid generally not being Pro.. Functionally, removes 5-oxoproline from various penultimate amino acid residues except L-proline. In Finegoldia magna (strain ATCC 29328 / DSM 20472 / WAL 2508) (Peptostreptococcus magnus), this protein is Pyrrolidone-carboxylate peptidase.